Consider the following 99-residue polypeptide: Sm-like protein LSM7 (99 aa).

Residues 6–86 form the Sm domain; sequence ETVLDLAKFV…VMLVSPTDGT (81 aa).

Belongs to the snRNP Sm proteins family. In terms of assembly, component of the heptameric LSM1-LSM7 complex that forms a seven-membered ring structure with a donut shape. The LSM subunits are arranged in the order LSM1, LSM2, LSM3, LSM6, LSM5, LSM7 and LSM4. Component of the heptameric LSM2-LSM8 complex that forms a seven-membered ring structure with a donut shape. The LSM subunits are arranged in the order LSM8, LSM2, LSM3, LSM6, LSM5, LSM7 and LSM4. LSM7 subunit interacts only with its two neighboring subunits, LSM5 and LSM4. As to expression, expressed in roots, leaves, stems, flowers and siliques.

It localises to the cytoplasm. The protein resides in the nucleus. Its function is as follows. Component of LSM protein complexes, which are involved in RNA processing. Component of the cytoplasmic LSM1-LSM7 complex which is involved in mRNA degradation by promoting decapping and leading to accurate 5'-3' mRNA decay. The cytoplasmic LSM1-LSM7 complex regulates developmental gene expression by the decapping of specific development-related transcripts. Component of the nuclear LSM2-LSM8 complex which is involved splicing nuclear mRNAs. LSM2-LSM8 binds directly to the U6 small nuclear RNAs (snRNAs) and is essential for accurate splicing of selected development-related mRNAs through the stabilization of the spliceosomal U6 snRNA. Plays a critical role in the regulation of development-related gene expression. This Arabidopsis thaliana (Mouse-ear cress) protein is Sm-like protein LSM7.